The sequence spans 597 residues: Elongation factor 4 (597 aa).

Residues 2–184 (KNIRNFSIIA…EIVAKIPAPT (183 aa)) enclose the tr-type G domain. GTP-binding positions include 14–19 (DHGKST) and 131–134 (NKID).

Belongs to the TRAFAC class translation factor GTPase superfamily. Classic translation factor GTPase family. LepA subfamily.

Its subcellular location is the cell inner membrane. It carries out the reaction GTP + H2O = GDP + phosphate + H(+). Its function is as follows. Required for accurate and efficient protein synthesis under certain stress conditions. May act as a fidelity factor of the translation reaction, by catalyzing a one-codon backward translocation of tRNAs on improperly translocated ribosomes. Back-translocation proceeds from a post-translocation (POST) complex to a pre-translocation (PRE) complex, thus giving elongation factor G a second chance to translocate the tRNAs correctly. Binds to ribosomes in a GTP-dependent manner. The polypeptide is Elongation factor 4 (Neisseria meningitidis serogroup B (strain ATCC BAA-335 / MC58)).